Here is a 790-residue protein sequence, read N- to C-terminus: Spermatogenesis-associated protein 20 (790 aa).

A compositionally biased stretch (basic residues) spans 1 to 19 (MSHHSSPPPKHKGEHKGHG). The interval 1–67 (MSHHSSPPPK…PPPAPPKTVN (67 aa)) is disordered. Residue Ser-5 is modified to Phosphoserine. Residues 23-36 (GSERGSSSRDKDRS) are compositionally biased toward basic and acidic residues. The residue at position 653 (Ser-653) is a Phosphoserine.

Its subcellular location is the secreted. In terms of biological role, may play a role in fertility regulation. This chain is Spermatogenesis-associated protein 20 (Spata20), found in Mus musculus (Mouse).